A 1528-amino-acid polypeptide reads, in one-letter code: 5'-3' exoribonuclease 1 (1528 aa).

3 disordered regions span residues 1246–1331 (SKKA…KSSE), 1431–1455 (PPPAPHGFGQPISFPPPPPMTNVSD), and 1470–1528 (LKKF…DEST). Residues 1274–1304 (QSEEKLRKERAHDLLNFIKKDTNEKNSESVD) are compositionally biased toward basic and acidic residues. Residues 1317-1326 (AKKVLLKRPA) show a composition bias toward basic residues. Residues 1500 to 1517 (SSGTNSTECQSPKSQSNA) are compositionally biased toward polar residues. The residue at position 1506 (Thr1506) is a Phosphothreonine. Phosphoserine is present on Ser1510. Over residues 1518 to 1528 (ADRDNKKDEST) the composition is skewed to basic and acidic residues.

Belongs to the 5'-3' exonuclease family. The cofactor is Mg(2+).

Its subcellular location is the cytoplasm. The protein localises to the perinuclear region. The protein resides in the P-body. With respect to regulation, 3'-phosphoadenosine 5'-phosphate (pAp) is an inhibitor of KEM1. Sodium-induced GCN4 expression reduces pAp accumulation by activating HAL2 expression, and therefore maintains mRNA degradation capacity which is likely to be important for the accurate and rapid adaptation of gene expression to salt stress. Multifunctional protein that exhibits several independent functions at different levels of the cellular processes. 5'-3' exonuclease component of the nonsense-mediated mRNA decay (NMD) which is a highly conserved mRNA degradation pathway, an RNA surveillance system whose role is to identify and rid cells of mRNA with premature termination codons and thus prevents accumulation of potentially harmful truncated proteins. The NMD pathway has a second role regulating the decay of wild-type mRNAs, and especially mRNAs that are important for telomere functions. Participate in CTH2-mediated and VTS1-mediated mRNA turnover. Involved in the degradation of several hypomodified mature tRNA species and participates in the 5'-processing or the degradation of the snoRNA precursors and rRNA processing. Involved in defense against virus and suppresses viral RNA recombination by rapidly removing the 5'-truncated RNAs, the substrates of recombination, and thus reducing the chance for recombination to occur in the parental strain. Required for the assembly of the virus-like particles of the Ty3 retrotransposon and contributes to the efficient generation of narnavirus 20S RNA by playing a major role in the elimination of the non-viral upstream sequences from the primary transcripts. Degrades single-stranded DNA (ss-DNA) and can renature complementary ss-DNA as well as catalyzes the formation of heteroduplex DNA from circular ss-DNA and homologous linear ds-DNA in vitro. Acts as a microtubule-associated protein which interacts with cytoplasmic microtubules through beta-tubulin and promotes in vitro assembly of tubulin into microtubules. Associates with microtubule functions such as chromosome transmission, nuclear migration, and SPB duplication. Has also a role in G1 to S transition and is involved in nuclear fusion during karyogamy. Required for the expression of ROK1 at the post-transcriptional level and for the alpha-factor induction of the karyogamy genes KAR3 and KAR4. Plays a role in filamentous growth. This is 5'-3' exoribonuclease 1 (XRN1) from Saccharomyces cerevisiae (strain ATCC 204508 / S288c) (Baker's yeast).